The primary structure comprises 424 residues: MAKGAVKKEKFEYEFFGPIGALGVTVLTTVVSFGSFYICNEEGCPAKFSKISHIFKKTPLFDQKSLILYLLWFSTLTLLWKCTNGKWAKGTPIDDKGTRLLYKINGFNSACLILGVVCTSIYLLGASCMEFIWDNFLQLMFAAYVFSVVLCTFCYVQSFFGKQQLAKGGTSGNILFDWFIGRSLNPRIGNFDIKCFCELRPGLILWVVFDIAFACHQYLVLGGRITDSMVLVIIFHTWYVLDSLINESAVLTTMDITTDGFGYMLSFGDLVWVPFLYSLQARYLAFHPVDLGLVKTLAILCLQFLGYYIFRGANGQKNRFRSNPNDPKLKHLKFIQTKRGTKLLTSGWWGMARHINYFGDWIMAWAWCLPAGFGSPIPYFYVAYFGVLLVHRNARDDHKCRVKYGEDWEKYCKAVKYRIIPYVY.

A run of 2 helical transmembrane segments spans residues 19 to 39 (IGAL…FYIC) and 112 to 132 (LILG…MEFI). NADP(+)-binding positions include lysine 317, arginine 321, leucine 344, tryptophan 349, and 356–357 (NY). The chain crosses the membrane as a helical span at residues 370–390 (PAGFGSPIPYFYVAYFGVLLV). Residues aspartate 396, 400 to 404 (CRVKY), and tyrosine 411 each bind NADP(+).

Belongs to the ERG4/ERG24 family.

Its subcellular location is the endoplasmic reticulum membrane. The enzyme catalyses 4,4-dimethyl-5alpha-cholesta-8,24-dien-3beta-ol + NADP(+) = 4,4-dimethyl-5alpha-cholesta-8,14,24-trien-3beta-ol + NADPH + H(+). It participates in steroid biosynthesis; zymosterol biosynthesis; zymosterol from lanosterol: step 2/6. Its pathway is steroid metabolism; ergosterol biosynthesis. In terms of biological role, delta(14)-sterol reductase; part of the third module of ergosterol biosynthesis pathway that includes by the late steps of the pathway. Erg24 reduces the C14=C15 double bond of 4,4-dimethyl-cholesta-8,14,24-trienol to produce 4,4-dimethyl-cholesta-8,24-dienol. The third module or late pathway involves the ergosterol synthesis itself through consecutive reactions that mainly occur in the endoplasmic reticulum (ER) membrane. Firstly, the squalene synthase erg9 catalyzes the condensation of 2 farnesyl pyrophosphate moieties to form squalene, which is the precursor of all steroids. Secondly, squalene is converted into lanosterol by the consecutive action of the squalene epoxidase erg1 and the lanosterol synthase erg7. The lanosterol 14-alpha-demethylase erg11/cyp1 catalyzes C14-demethylation of lanosterol to produce 4,4'-dimethyl cholesta-8,14,24-triene-3-beta-ol. In the next steps, a complex process involving various demethylation, reduction and desaturation reactions catalyzed by the C-14 reductase erg24 and the C-4 demethylation complex erg25-erg26-erg27 leads to the production of zymosterol. Erg28 likely functions in the C-4 demethylation complex reaction by tethering erg26 and Erg27 to the endoplasmic reticulum or to facilitate interaction between these proteins. Then, the sterol 24-C-methyltransferase erg6 catalyzes the methyl transfer from S-adenosyl-methionine to the C-24 of zymosterol to form fecosterol. The C-8 sterol isomerase erg2 catalyzes the reaction which results in unsaturation at C-7 in the B ring of sterols and thus converts fecosterol to episterol. The sterol-C5-desaturases erg31 and erg32 then catalyze the introduction of a C-5 double bond in the B ring to produce 5-dehydroepisterol. The C-22 sterol desaturase erg5 further converts 5-dehydroepisterol into ergosta-5,7,22,24(28)-tetraen-3beta-ol by forming the C-22(23) double bond in the sterol side chain. Finally, ergosta-5,7,22,24(28)-tetraen-3beta-ol is substrate of the C-24(28) sterol reductase erg4 to produce ergosterol. In the genus Schizosaccharomyces, a second route exists between lanosterol and fecosterol, via the methylation of lanosterol to eburicol by erg6, followed by C14-demethylation by erg11/cyp1 and C4-demethylation by the demethylation complex erg25-erg26-erg27. This is Delta(14)-sterol reductase erg24 from Schizosaccharomyces pombe (strain 972 / ATCC 24843) (Fission yeast).